Reading from the N-terminus, the 90-residue chain is U7-theraphotoxin-Hhn1a 2 (90 aa).

Positions 1–19 (MKIAIFTVVLALAVFAVLS) are cleaved as a signal peptide. The propeptide occupies 20–50 (FGWEANEKALSEEFTELIHEKEAASETEARE). 3 disulfides stabilise this stretch: cysteine 51–cysteine 65, cysteine 58–cysteine 70, and cysteine 64–cysteine 81.

The protein belongs to the neurotoxin 10 (Hwtx-1) family. 13 (Hntx-13) subfamily. In terms of tissue distribution, expressed by the venom gland.

It localises to the secreted. Functionally, ion channel inhibitor. The sequence is that of U7-theraphotoxin-Hhn1a 2 from Cyriopagopus hainanus (Chinese bird spider).